The following is a 217-amino-acid chain: Translation initiation factor IF-3 (217 aa).

Positions 179-217 (PRKTPLVKKEEKEAAPTKAVRTIPAPPRPTAAKVAAQQA) are disordered.

Belongs to the IF-3 family. In terms of assembly, monomer.

The protein localises to the cytoplasm. In terms of biological role, IF-3 binds to the 30S ribosomal subunit and shifts the equilibrium between 70S ribosomes and their 50S and 30S subunits in favor of the free subunits, thus enhancing the availability of 30S subunits on which protein synthesis initiation begins. The polypeptide is Translation initiation factor IF-3 (Parasynechococcus marenigrum (strain WH8102)).